A 377-amino-acid chain; its full sequence is Gibberellin 20 oxidase 1 (377 aa).

One can recognise a Fe2OG dioxygenase domain in the interval glutamate 222–proline 322. Fe cation-binding residues include histidine 247, aspartate 249, and histidine 303. Arginine 313 is an active-site residue.

It belongs to the iron/ascorbate-dependent oxidoreductase family. GA20OX subfamily. It depends on Fe(2+) as a cofactor. Requires L-ascorbate as cofactor. As to expression, highly expressed in stems and inflorescence tissues. Detected in seeds, roots, leaves and siliques.

The catalysed reaction is gibberellin A12 + 2 2-oxoglutarate + 3 O2 + H(+) = gibberellin A9 + 2 succinate + 3 CO2 + 2 H2O. It catalyses the reaction gibberellin A12 + 2-oxoglutarate + O2 = gibberellin A15 + succinate + CO2. It carries out the reaction gibberellin A15 + 2-oxoglutarate + O2 = gibberellin A24 + succinate + CO2 + H2O. The enzyme catalyses gibberellin A53 + 2-oxoglutarate + O2 = gibberellin A44 + succinate + CO2. The protein operates within plant hormone biosynthesis; gibberellin biosynthesis. Key oxidase enzyme in the biosynthesis of gibberellin that catalyzes the conversion of GA12 to GA9, via a three-step oxidation at C-20 of the GA skeleton. GA53 is less effectively oxidized than GA12 and is only oxidized one step to GA44. Involved in the promotion of the floral transition, fertility and silique elongation, but plays only a minor role in elongation of seedling organs. Acts redundantly with GA20OX2. This chain is Gibberellin 20 oxidase 1 (GA20OX1), found in Arabidopsis thaliana (Mouse-ear cress).